The sequence spans 91 residues: DNA-directed RNA polymerase subunit omega (91 aa).

The protein belongs to the RNA polymerase subunit omega family. As to quaternary structure, the RNAP catalytic core consists of 2 alpha, 1 beta, 1 beta' and 1 omega subunit. When a sigma factor is associated with the core the holoenzyme is formed, which can initiate transcription.

It catalyses the reaction RNA(n) + a ribonucleoside 5'-triphosphate = RNA(n+1) + diphosphate. Its function is as follows. Promotes RNA polymerase assembly. Latches the N- and C-terminal regions of the beta' subunit thereby facilitating its interaction with the beta and alpha subunits. This is DNA-directed RNA polymerase subunit omega from Pseudoalteromonas translucida (strain TAC 125).